The chain runs to 171 residues: Small ribosomal subunit protein uS13 (171 aa).

Disordered stretches follow at residues 1-22 (MGKA…AAKK) and 142-171 (RHEK…RKKE). Basic and acidic residues predominate over residues 10-22 (KSDKEAAKPAAKK). Over residues 142 to 158 (RHEKGKKVRGQRTRSNG) the composition is skewed to basic residues.

It belongs to the universal ribosomal protein uS13 family. Part of the 30S ribosomal subunit. Forms a loose heterodimer with protein S19. Forms two bridges to the 50S subunit in the 70S ribosome.

Functionally, located at the top of the head of the 30S subunit, it contacts several helices of the 16S rRNA. In the 70S ribosome it contacts the 23S rRNA (bridge B1a) and protein L5 of the 50S subunit (bridge B1b), connecting the 2 subunits; these bridges are implicated in subunit movement. The sequence is that of Small ribosomal subunit protein uS13 from Thermoplasma volcanium (strain ATCC 51530 / DSM 4299 / JCM 9571 / NBRC 15438 / GSS1).